Here is a 565-residue protein sequence, read N- to C-terminus: NAD-dependent malic enzyme (565 aa).

Y104 (proton donor) is an active-site residue. R157 is an NAD(+) binding site. Residue K175 is the Proton acceptor of the active site. The a divalent metal cation site is built by E246, D247, and D270. NAD(+) is bound by residues D270 and N418.

Belongs to the malic enzymes family. In terms of assembly, homotetramer. The cofactor is Mg(2+). Requires Mn(2+) as cofactor.

The catalysed reaction is (S)-malate + NAD(+) = pyruvate + CO2 + NADH. It catalyses the reaction oxaloacetate + H(+) = pyruvate + CO2. This is NAD-dependent malic enzyme from Enterobacter sp. (strain 638).